The chain runs to 320 residues: Heterogeneous nuclear ribonucleoprotein A1-like 3 (320 aa).

RRM domains lie at 14–97 and 105–184; these read RKLF…DSQR and KKIF…LSKQ. 2 disordered regions span residues 182-218 and 271-320; these read SKQE…NFGR and SNFG…GRRF. The segment covering 197–218 has biased composition (gly residues); sequence SGSGNFGGGRGGGFGGNDNFGR. The span at 308 to 320 shows a compositional bias: low complexity; sequence SSSSSSYGSGRRF.

In Homo sapiens (Human), this protein is Heterogeneous nuclear ribonucleoprotein A1-like 3.